A 623-amino-acid chain; its full sequence is Heterogeneous nuclear ribonucleoprotein Q (623 aa).

Residue Ala2 is modified to N-acetylalanine. A Phosphoserine modification is found at Ser159. RRM domains lie at 162–241, 243–325, and 338–408; these read TEIF…ISVA, NRLF…WADP, and KVLF…FAKP. Residue Lys168 forms a Glycyl lysine isopeptide (Lys-Gly) (interchain with G-Cter in SUMO2) linkage. Lys221 is modified (N6-acetyllysine). Lys363 bears the N6-acetyllysine mark. Residue Tyr373 is modified to Phosphotyrosine. The interval 400-561 is interaction with APOBEC1; it reads NIEIVFAKPP…GARGGRGGNV (162 aa). Arg444 carries the asymmetric dimethylarginine; by PRMT1; alternate modification. An Omega-N-methylarginine; by PRMT1; alternate modification is found at Arg444. A run of 6 repeats spans residues 448-450, 451-453, 460-464, 469-472, 478-480, and 485-488. The interval 448 to 559 is 8 X 3 AA repeats of R-G-G; it reads RGGRGGYGYP…VRGARGGRGG (112 aa). Residues 460 to 488 are 3 X 4 AA repeats of Y-Y-G-Y; sequence YYGYEDYYDYYGYDYHNYRGGYEDPYYGY. Arg496 carries the omega-N-methylarginine; by PRMT1 modification. A disordered region spans residues 497–623; the sequence is GRGGRGARGA…YQDTFGQQWK (127 aa). The 1-4 repeat unit spans residues 498-500; it reads RGG. Residues 504–522 show a composition bias toward low complexity; it reads RGAAPSRGRGAAPPRGRAG. An Asymmetric dimethylarginine; by PRMT1 modification is found at Arg510. Asymmetric dimethylarginine; by PRMT1; alternate is present on residues Arg518, Arg526, Arg536, and Arg539. 4 positions are modified to omega-N-methylarginine; by PRMT1; alternate: Arg518, Arg526, Arg536, and Arg539. The interval 518 to 549 is interaction with SMN; it reads RGRAGYSQRGGPGSARGVRGARGGAQQQRGRG. Residues 526–528 form a 1-5 repeat; sequence RGG. Tandem repeats lie at residues 539–541, 554–556, and 557–559. The segment covering 550–562 has biased composition (gly residues); the sequence is VRGARGGRGGNVG. The short motif at 564 to 578 is the Bipartite nuclear localization signal element; sequence KRKADGYNQPDSKRR. The segment covering 580–595 has biased composition (polar residues); sequence TNNQNWGSQPIAQQPL. A Phosphoserine modification is found at Ser587. Lys607 participates in a covalent cross-link: Glycyl lysine isopeptide (Lys-Gly) (interchain with G-Cter in SUMO2). The segment covering 611–623 has biased composition (polar residues); the sequence is QEFYQDTFGQQWK.

Isoform 1 is a component of the APOB mRNA editosome complex and interacts with APOBEC1 and A1CF (APOBEC1 complementation factor). Part of a complex associated with the FOS mCRD domain and consisting of PABPC1, PAIP1, CSDE1/UNR, HNRPD and SYNCRIP. Isoform 3 interacts with HNRPR. Interacts with POLR2A hyperphosphorylated C-terminal domain. Isoform 1, isoform 2 and isoform 3 interact with SMN. Isoform 3 interacts through its C-terminal domain with SYT7, SYT8 and SYT9. The non-phosphorylated and phosphorylated forms are colocalized with PAIP1 in polysomes. Interacts with HABP4. Identified in a histone pre-mRNA complex, at least composed of ERI1, LSM11, SLBP, SNRPB, SYNCRIP and YBX1. Identified in the spliceosome C complex. Component of the coding region determinant (CRD)-mediated complex, composed of DHX9, HNRNPU, IGF2BP1, SYNCRIP and YBX1. Identified in a mRNP complex, at least composed of DHX9, DDX3X, ELAVL1, HNRNPU, IGF2BP1, ILF3, PABPC1, PCBP2, PTBP2, STAU1, STAU2, SYNCRIP and YBX1. Identified in a mRNP granule complex, at least composed of ACTB, ACTN4, DHX9, ERG, HNRNPA1, HNRNPA2B1, HNRNPAB, HNRNPD, HNRNPL, HNRNPR, HNRNPU, HSPA1, HSPA8, IGF2BP1, ILF2, ILF3, NCBP1, NCL, PABPC1, PABPC4, PABPN1, RPLP0, RPS3, RPS3A, RPS4X, RPS8, RPS9, SYNCRIP, YBX1 and untranslated mRNAs. Interacts with GTPBP1. Component of the GAIT complex; in humans the complex assembly seems to be a two-step process in which EPRS1 first associates with SYNCRIP to form a pre-GAIT complex which is deficient in GAIT element binding. As to quaternary structure, (Microbial infection) Interacts with minute virus of mice (MVM) NS1 protein. In terms of assembly, (Microbial infection) Interacts with herpes virus 8/HHV-8 protein vIRF-1; this interaction induces ubiquitination and degradation of SYNCRIP. Phosphorylated on tyrosine. The membrane-bound form found in microsomes is phosphorylated in vitro by insulin receptor tyrosine kinase (INSR). Phosphorylation is inhibited upon binding to RNA, whereas the cytoplasmic form is poorly phosphorylated. In terms of tissue distribution, ubiquitously expressed. Detected in heart, brain, pancreas, placenta, spleen, lung, liver, skeletal muscle, kidney, thymus, prostate, uterus, small intestine, colon, peripheral blood and testis.

It localises to the cytoplasm. The protein resides in the microsome. The protein localises to the endoplasmic reticulum. Its subcellular location is the nucleus. It is found in the nucleoplasm. Functionally, heterogenous nuclear ribonucleoprotein (hnRNP) implicated in mRNA processing mechanisms. Component of the CRD-mediated complex that promotes MYC mRNA stability. Isoform 1, isoform 2 and isoform 3 are associated in vitro with pre-mRNA, splicing intermediates and mature mRNA protein complexes. Isoform 1 binds to apoB mRNA AU-rich sequences. Isoform 1 is part of the APOB mRNA editosome complex and may modulate the postranscriptional C to U RNA-editing of the APOB mRNA through either by binding to A1CF (APOBEC1 complementation factor), to APOBEC1 or to RNA itself. May be involved in translationally coupled mRNA turnover. Implicated with other RNA-binding proteins in the cytoplasmic deadenylation/translational and decay interplay of the FOS mRNA mediated by the major coding-region determinant of instability (mCRD) domain. Interacts in vitro preferentially with poly(A) and poly(U) RNA sequences. Isoform 3 may be involved in cytoplasmic vesicle-based mRNA transport through interaction with synaptotagmins. Component of the GAIT (gamma interferon-activated inhibitor of translation) complex which mediates interferon-gamma-induced transcript-selective translation inhibition in inflammation processes. Upon interferon-gamma activation assembles into the GAIT complex which binds to stem loop-containing GAIT elements in the 3'-UTR of diverse inflammatory mRNAs (such as ceruplasmin) and suppresses their translation; seems not to be essential for GAIT complex function. The polypeptide is Heterogeneous nuclear ribonucleoprotein Q (SYNCRIP) (Homo sapiens (Human)).